Here is a 256-residue protein sequence, read N- to C-terminus: Ribosomal RNA large subunit methyltransferase E (256 aa).

S-adenosyl-L-methionine is bound by residues G50, W52, D69, D85, and D108. Catalysis depends on K148, which acts as the Proton acceptor. In terms of domain architecture, TRAM spans 195-253 (SLRKGDVVDVTIDAMGKTGDGIAHVDDFVVFVKGGSVGDKLKIKITDVKPSFAFADIVE).

It belongs to the class I-like SAM-binding methyltransferase superfamily. RNA methyltransferase RlmE family.

Its subcellular location is the cytoplasm. It catalyses the reaction uridine(2552) in 23S rRNA + S-adenosyl-L-methionine = 2'-O-methyluridine(2552) in 23S rRNA + S-adenosyl-L-homocysteine + H(+). Its function is as follows. Specifically methylates the uridine in position 2552 of 23S rRNA at the 2'-O position of the ribose in the fully assembled 50S ribosomal subunit. This is Ribosomal RNA large subunit methyltransferase E from Methanocella arvoryzae (strain DSM 22066 / NBRC 105507 / MRE50).